The chain runs to 503 residues: Lactation elevated protein 1 homolog B (503 aa).

Residues 108-155 (LQNQPTSELQDKVGSRETVNICRPDENVSNEKEDQQEESSKPHPPQGY) form a disordered region. Positions 130-148 (RPDENVSNEKEDQQEESSK) are enriched in basic and acidic residues. 159 to 166 (GNVGTGKT) lines the ATP pocket.

This sequence belongs to the AFG1 ATPase family.

The polypeptide is Lactation elevated protein 1 homolog B (lace1b) (Danio rerio (Zebrafish)).